Reading from the N-terminus, the 453-residue chain is Bifunctional protein GlmU (453 aa).

The pyrophosphorylase stretch occupies residues 1-231; sequence MERSSLAVIL…EKELTGCNNR (231 aa). Residues 10–13, Lys-24, Gln-77, 82–83, 105–107, Gly-143, Glu-157, Asn-172, and Asn-229 each bind UDP-N-acetyl-alpha-D-glucosamine; these read LAAG, GT, and YGD. Position 107 (Asp-107) interacts with Mg(2+). Asn-229 provides a ligand contact to Mg(2+). Residues 232–252 are linker; that stretch reads AELAFIERLWQERRRHELMVD. The N-acetyltransferase stretch occupies residues 253 to 453; that stretch reads GVSMIAPETV…AQKEAKKKSS (201 aa). The UDP-N-acetyl-alpha-D-glucosamine site is built by Arg-318 and Lys-336. His-348 (proton acceptor) is an active-site residue. Residues Tyr-351 and Asn-362 each coordinate UDP-N-acetyl-alpha-D-glucosamine. Acetyl-CoA is bound by residues Ala-365, 371–372, Ser-390, Ser-408, and Arg-425; that span reads NY.

In the N-terminal section; belongs to the N-acetylglucosamine-1-phosphate uridyltransferase family. The protein in the C-terminal section; belongs to the transferase hexapeptide repeat family. As to quaternary structure, homotrimer. Requires Mg(2+) as cofactor.

It localises to the cytoplasm. It catalyses the reaction alpha-D-glucosamine 1-phosphate + acetyl-CoA = N-acetyl-alpha-D-glucosamine 1-phosphate + CoA + H(+). The catalysed reaction is N-acetyl-alpha-D-glucosamine 1-phosphate + UTP + H(+) = UDP-N-acetyl-alpha-D-glucosamine + diphosphate. It functions in the pathway nucleotide-sugar biosynthesis; UDP-N-acetyl-alpha-D-glucosamine biosynthesis; N-acetyl-alpha-D-glucosamine 1-phosphate from alpha-D-glucosamine 6-phosphate (route II): step 2/2. It participates in nucleotide-sugar biosynthesis; UDP-N-acetyl-alpha-D-glucosamine biosynthesis; UDP-N-acetyl-alpha-D-glucosamine from N-acetyl-alpha-D-glucosamine 1-phosphate: step 1/1. Its pathway is bacterial outer membrane biogenesis; LPS lipid A biosynthesis. Its function is as follows. Catalyzes the last two sequential reactions in the de novo biosynthetic pathway for UDP-N-acetylglucosamine (UDP-GlcNAc). The C-terminal domain catalyzes the transfer of acetyl group from acetyl coenzyme A to glucosamine-1-phosphate (GlcN-1-P) to produce N-acetylglucosamine-1-phosphate (GlcNAc-1-P), which is converted into UDP-GlcNAc by the transfer of uridine 5-monophosphate (from uridine 5-triphosphate), a reaction catalyzed by the N-terminal domain. The sequence is that of Bifunctional protein GlmU from Agrobacterium fabrum (strain C58 / ATCC 33970) (Agrobacterium tumefaciens (strain C58)).